Reading from the N-terminus, the 881-residue chain is Leucine--tRNA ligase (881 aa).

Residues 48-58 (PYPSGKLHMGH) carry the 'HIGH' region motif. The 'KMSKS' region signature appears at 638–642 (KMSKS). Lysine 641 serves as a coordination point for ATP.

The protein belongs to the class-I aminoacyl-tRNA synthetase family.

Its subcellular location is the cytoplasm. It carries out the reaction tRNA(Leu) + L-leucine + ATP = L-leucyl-tRNA(Leu) + AMP + diphosphate. The sequence is that of Leucine--tRNA ligase from Janthinobacterium sp. (strain Marseille) (Minibacterium massiliensis).